The sequence spans 124 residues: UPF0102 protein Meso_4010 (124 aa).

Belongs to the UPF0102 family.

This is UPF0102 protein Meso_4010 from Chelativorans sp. (strain BNC1).